A 930-amino-acid chain; its full sequence is Short transient receptor potential channel 6 (930 aa).

Positions 1–27 (MSQSPRFVTRRGGSLKAAPGAGTRRNE) are disordered. Residues 1 to 437 (MSQSPRFVTR…CSKMGKILRG (437 aa)) are Cytoplasmic-facing. ANK repeat units lie at residues 96–125 (IEEE…SLNV), 131–160 (MGQN…LSRV), 162–188 (DALL…FAEG), and 217–246 (HDVT…RIER). The helical transmembrane segment at 438 to 458 (PFMKFVAHAASFTIFLGLLVM) threads the bilayer. Over 459–486 (NAADRFEGTKLLPNETSTDNARQLFRMK) the chain is Extracellular. Residues 487–507 (TSCFSWMEMLIISWVIGMIWA) traverse the membrane as a helical segment. At 508–520 (ECKEIWTQGPKEY) the chain is on the cytoplasmic side. Residues 521–541 (LFELWNMLDFGMLAIFAASFI) traverse the membrane as a helical segment. At 542–591 (ARFMAFWHASKAQSIIDANDTLKDLTKVTLGDNVKYYNLARIKWDPTDPQ) the chain is on the extracellular side. Asn560 carries an N-linked (GlcNAc...) asparagine glycan. A helical transmembrane segment spans residues 592–612 (IISEGLYAIAVVLSFSRIAYI). Topologically, residues 613–635 (LPANESFGPLQISLGRTVKDIFK) are cytoplasmic. A helical membrane pass occupies residues 636–656 (FMVIFIMVFVAFMIGMFNLYS). Over 657–705 (YYIGAKQNEAFTTVEESFKTLFWAIFGLSEVKSVVINYNHKFIENIGYV) the chain is Extracellular. A helical membrane pass occupies residues 706–726 (LYGVYNVTMVIVLLNMLIAMI). At 727-930 (NSSFQEIEDD…LEPKLEESRR (204 aa)) the chain is on the cytoplasmic side. Residue Ser814 is modified to Phosphoserine.

It belongs to the transient receptor (TC 1.A.4) family. STrpC subfamily. TRPC6 sub-subfamily. As to quaternary structure, homodimer; forms channel complex. Interacts with MX1 and RNF24. Phosphorylated by FYN, leading to an increase of TRPC6 channel activity. Post-translationally, N-glycosylated. In terms of tissue distribution, lung and brain.

Its subcellular location is the cell membrane. It catalyses the reaction Ca(2+)(in) = Ca(2+)(out). In terms of biological role, forms a receptor-activated non-selective calcium permeant cation channel. Probably is operated by a phosphatidylinositol second messenger system activated by receptor tyrosine kinases or G-protein coupled receptors. Activated by diacylglycerol (DAG) in a membrane-delimited fashion, independently of protein kinase C. Seems not to be activated by intracellular calcium store depletion. In Mus musculus (Mouse), this protein is Short transient receptor potential channel 6.